A 205-amino-acid polypeptide reads, in one-letter code: Recombination protein RecR (205 aa).

A C4-type zinc finger spans residues 60-75 (CKVCHNISDTETCQIC). The Toprim domain occupies 83 to 178 (STVCVVENIR…KLSVIARGIS (96 aa)).

The protein belongs to the RecR family.

In terms of biological role, may play a role in DNA repair. It seems to be involved in an RecBC-independent recombinational process of DNA repair. It may act with RecF and RecO. This Bacteroides thetaiotaomicron (strain ATCC 29148 / DSM 2079 / JCM 5827 / CCUG 10774 / NCTC 10582 / VPI-5482 / E50) protein is Recombination protein RecR.